The chain runs to 312 residues: Olfactory receptor 1500 (312 aa).

The Extracellular portion of the chain corresponds to 1 to 25 (MTGNNQTLILEFLLLGLPIPSEYHL). A glycan (N-linked (GlcNAc...) asparagine) is linked at Asn-5. The chain crosses the membrane as a helical span at residues 26 to 49 (LFYALFLAMYLTIILGNLLIIVLV). Residues 50 to 57 (RLDSHLHM) lie on the Cytoplasmic side of the membrane. Residues 58–79 (PMYLFLSNLSFSDLCFSSVTMP) form a helical membrane-spanning segment. Residues 80 to 100 (KLLQNMQSQVPSISYTGCLTQ) are Extracellular-facing. A disulfide bridge connects residues Cys-97 and Cys-189. The helical transmembrane segment at 101-120 (LYFFMVFGDMESFLLVVMAY) threads the bilayer. The Cytoplasmic segment spans residues 121–139 (DRYVAICFPLRYTTIMSTK). Residues 140–158 (FCASLVLLLWMLTMTHALL) traverse the membrane as a helical segment. Residues 159–196 (HTLLIARLSFCEKNVILHFFCDISALLKLSCSDIYVNE) are Extracellular-facing. The chain crosses the membrane as a helical span at residues 197–219 (LMIYILGGLIIIIPFLLIVMSYV). Residues 220 to 236 (RIFFSILKFPSIQDIYK) lie on the Cytoplasmic side of the membrane. Residues 237 to 260 (VFSTCGSHLSVVTLFYGTIFGIYL) traverse the membrane as a helical segment. Over 261–272 (CPSGNNSTVKEI) the chain is Extracellular. The chain crosses the membrane as a helical span at residues 273-292 (AMAMMYTVVTPMLNPFIYSL). Residues 293 to 312 (RNRDMKRALIRVICTKKISL) lie on the Cytoplasmic side of the membrane.

It belongs to the G-protein coupled receptor 1 family. As to expression, olfactory epithelium.

The protein localises to the cell membrane. Functionally, odorant receptor. The polypeptide is Olfactory receptor 1500 (Olr1500) (Rattus norvegicus (Rat)).